The following is a 437-amino-acid chain: Phosphoglucosamine mutase (437 aa).

S93 (phosphoserine intermediate) is an active-site residue. Mg(2+) is bound by residues S93, D230, D232, and D234. Residue S93 is modified to Phosphoserine.

The protein belongs to the phosphohexose mutase family. The cofactor is Mg(2+). Activated by phosphorylation.

The enzyme catalyses alpha-D-glucosamine 1-phosphate = D-glucosamine 6-phosphate. Functionally, catalyzes the conversion of glucosamine-6-phosphate to glucosamine-1-phosphate. The chain is Phosphoglucosamine mutase from Clavibacter michiganensis subsp. michiganensis (strain NCPPB 382).